The sequence spans 240 residues: Small ribosomal subunit protein uS3 (240 aa).

The KH type-2 domain occupies 39-107 (IRDFIKKEAK…ELHLNIVEVR (69 aa)). 2 stretches are compositionally biased toward basic and acidic residues: residues 212 to 221 (PQARDRRATE) and 231 to 240 (PRRDRDRDAR). A disordered region spans residues 212 to 240 (PQARDRRATEAQDGPSPRGPRRDRDRDAR).

It belongs to the universal ribosomal protein uS3 family. Part of the 30S ribosomal subunit. Forms a tight complex with proteins S10 and S14.

In terms of biological role, binds the lower part of the 30S subunit head. Binds mRNA in the 70S ribosome, positioning it for translation. The sequence is that of Small ribosomal subunit protein uS3 from Paracoccus denitrificans (strain Pd 1222).